The chain runs to 515 residues: Vesicular acetylcholine transporter (515 aa).

At 1–40 the chain is on the cytoplasmic side; it reads MGVTMAVGLAKAAMGKISSAIGERSKRISGAMNEPRRKRK. A helical membrane pass occupies residues 41–61; it reads ILLVIVCIAMLLDNMLYMVIV. At 62-112 the chain is on the lumenal, vesicle side; the sequence is PIIPNYLETIRTYKLVYITTPSNGTNGSLLNSTQRAVLERNPNANEDIQIG. Residues N84, N87, and N92 are each glycosylated (N-linked (GlcNAc...) asparagine). The chain crosses the membrane as a helical span at residues 113-133; that stretch reads VLFASKAILQLLSNPFTGTFI. The Cytoplasmic portion of the chain corresponds to 134–139; that stretch reads DRVGYD. A helical membrane pass occupies residues 140 to 160; sequence IPLLIGLTIMFFSTITFAFGE. The Lumenal, vesicle portion of the chain corresponds to 161 to 169; that stretch reads SYAVLFAAR. Residues 170–190 form a helical membrane-spanning segment; that stretch reads SLQGLGSAFADTSGIAMIADK. Residues 191-201 lie on the Cytoplasmic side of the membrane; it reads YTEESERTQAL. A helical membrane pass occupies residues 202-222; it reads GIALAFISFGSLVAPPFGGVL. Residues 223–229 are Lumenal, vesicle-facing; sequence YQFAGKW. The helical transmembrane segment at 230–250 threads the bilayer; that stretch reads VPFLVLSFVCLLDGILLLMVV. Over 251-271 the chain is Cytoplasmic; that stretch reads TPFASRTRENMLQGTPIYKLM. A helical membrane pass occupies residues 272–292; it reads IDPYIAVVAGALTTCNIPLAF. Residues 293–310 lie on the Lumenal, vesicle side of the membrane; that stretch reads LEPTISNWMKKTMNASEW. A glycan (N-linked (GlcNAc...) asparagine) is linked at N306. Residues 311–331 form a helical membrane-spanning segment; that stretch reads QMGITWLPAFFPHILGVYITV. Topologically, residues 332 to 341 are cytoplasmic; sequence KLAAKYPNYQ. Residues 342–362 form a helical membrane-spanning segment; it reads WFYGAVGLVIIGASSCTIPAC. The Lumenal, vesicle segment spans residues 363 to 367; the sequence is RNFEE. A helical transmembrane segment spans residues 368-388; sequence LIIPLCALCFGIALVDTALLP. Over 389–404 the chain is Cytoplasmic; that stretch reads TLAFLVDIRYVSVYGS. Residues 405 to 425 form a helical membrane-spanning segment; sequence VYAIADISYSVAYALGPIMAG. Residues 426–432 lie on the Lumenal, vesicle side of the membrane; sequence QIVHDLG. A helical transmembrane segment spans residues 433-453; the sequence is FVQLNLGMGLVNILYAPALLF. Residues 454–515 are Cytoplasmic-facing; sequence LRNVCQMKPS…VLSDQEGYSE (62 aa). Positions 489 to 515 are disordered; that stretch reads AAKEPHGSSSGNHSVHAVLSDQEGYSE.

Belongs to the major facilitator superfamily. Vesicular transporter family. Electric lobe.

Its subcellular location is the membrane. Its function is as follows. Involved in acetylcholine transport into synaptic vesicles. This Tetronarce californica (Pacific electric ray) protein is Vesicular acetylcholine transporter.